Reading from the N-terminus, the 339-residue chain is Arylacetonitrilase (339 aa).

One can recognise a CN hydrolase domain in the interval 5-290; sequence IRVAVTQAEP…EGIVYADLDL (286 aa). Glu45 (proton acceptor) is an active-site residue. Lys126 is a catalytic residue. Catalysis depends on Cys167, which acts as the Nucleophile.

The protein belongs to the carbon-nitrogen hydrolase superfamily. Nitrilase family.

The enzyme catalyses a nitrile + 2 H2O = a carboxylate + NH4(+). It catalyses the reaction 4-chlorophenylacetonitrile + 2 H2O = 4-chlorophenylacetate + NH4(+). In terms of biological role, nitrilase that hydrolyzes preferentially phenylacetonitrile, (R,S)-mandelonitrile, and 3-indolylacetonitrile. This Fusarium vanettenii (strain ATCC MYA-4622 / CBS 123669 / FGSC 9596 / NRRL 45880 / 77-13-4) (Fusarium solani subsp. pisi) protein is Arylacetonitrilase.